The primary structure comprises 419 residues: L-rhamnose isomerase (419 aa).

3 residues coordinate Mn(2+): His262, Asp294, and Asp296.

This sequence belongs to the rhamnose isomerase family. In terms of assembly, homotetramer. Requires Mn(2+) as cofactor.

It is found in the cytoplasm. The catalysed reaction is L-rhamnopyranose = L-rhamnulose. The protein operates within carbohydrate degradation; L-rhamnose degradation; glycerone phosphate from L-rhamnose: step 1/3. Catalyzes the interconversion of L-rhamnose and L-rhamnulose. The chain is L-rhamnose isomerase from Klebsiella pneumoniae subsp. pneumoniae (strain ATCC 700721 / MGH 78578).